A 226-amino-acid chain; its full sequence is Vacuolar protein sorting-associated protein 20 (226 aa).

Gly-2 carries the N-myristoyl glycine lipid modification.

Belongs to the SNF7 family. In terms of assembly, component of the endosomal sorting required for transport complex III (ESCRT-III).

The protein resides in the endosome membrane. Its subcellular location is the vacuole membrane. The protein localises to the cytoplasm. It is found in the cell cortex. Class E VPS protein implicated in concentration and sorting of cargo proteins of the multivesicular body (MVB) for incorporation into intralumenal vesicles. The lumenal sequestrated membrane proteins will be targeted into the vacuole after fusion of the endosome with the vacuole. This is Vacuolar protein sorting-associated protein 20 (vps20) from Schizosaccharomyces pombe (strain 972 / ATCC 24843) (Fission yeast).